A 637-amino-acid polypeptide reads, in one-letter code: MGLLSQGSPLSWEETKRHADHVRRHGILQFLHIYHAVKDRHKDVLKWGDEVEYMLVSFDHENKKVRLVLSGEKVLETLQEKGERTNPNHPTLWRPEYGSYMIEGTPGQPYGGTMSEFNTVEANMRKRRKEATSILEENQALCTITSFPRLGCPGFTLPEVKPNPVEGGASKSLFFPDEAINKHPRFSTLTRNIRHRRGEKVVINVPIFKDKNTPSPFIETFTEDDEASRASKPDHIYMDAMGFGMGNCCLQVTFQACSISEARYLYDQLATICPIVMALSAASPFYRGYVSDIDCRWGVISASVDDRTREERGLEPLKNNNYRISKSRYDSIDSYLSKCGEKYNDIDLTIDKEIYEQLLQEGIDHLLAQHVAHLFIRDPLTLFEEKIHLDDANESDHFENIQSTNWQTMRFKPPPPNSDIGWRVEFRPMEVQLTDFENSAYVVFVVLLTRVILSYKLDFLIPLSKVDENMKVAQKRDAVLQGMFYFRKDICKGGNAVVDGCGKAQNSTELAAEEYTLMSIDTIINGKEGVFPGLIPILNSYLENMEVDVDTRCSILNYLKLIKKRASGELMTVARWMREFIANHPDYKQDSVITDEMNYSLILKCNQIANELCECPELLGSAFRKVKYSGSKTDSSN.

Position 1 is an N-acetylmethionine (Met1). Residues Ser5 and Ser8 each carry the phosphoserine modification.

Belongs to the glutamate--cysteine ligase type 3 family. In terms of assembly, heterodimer of a catalytic heavy chain and a regulatory light chain.

The catalysed reaction is L-cysteine + L-glutamate + ATP = gamma-L-glutamyl-L-cysteine + ADP + phosphate + H(+). It catalyses the reaction (2S)-2-aminobutanoate + L-glutamate + ATP = gamma-L-glutamyl-(2S)-2-aminobutanoate + ADP + phosphate + H(+). The protein operates within sulfur metabolism; glutathione biosynthesis; glutathione from L-cysteine and L-glutamate: step 1/2. With respect to regulation, feedback inhibition by glutathione. Functionally, catalyzes the ATP-dependent ligation of L-glutamate and L-cysteine and participates in the first and rate-limiting step in glutathione biosynthesis. In Homo sapiens (Human), this protein is Glutamate--cysteine ligase catalytic subunit.